The primary structure comprises 502 residues: UDP-N-acetylmuramoylalanine--D-glutamate ligase (502 aa).

Gly129 to Thr135 is an ATP binding site.

This sequence belongs to the MurCDEF family.

Its subcellular location is the cytoplasm. The catalysed reaction is UDP-N-acetyl-alpha-D-muramoyl-L-alanine + D-glutamate + ATP = UDP-N-acetyl-alpha-D-muramoyl-L-alanyl-D-glutamate + ADP + phosphate + H(+). It participates in cell wall biogenesis; peptidoglycan biosynthesis. Functionally, cell wall formation. Catalyzes the addition of glutamate to the nucleotide precursor UDP-N-acetylmuramoyl-L-alanine (UMA). In Burkholderia ambifaria (strain MC40-6), this protein is UDP-N-acetylmuramoylalanine--D-glutamate ligase.